Here is a 119-residue protein sequence, read N- to C-terminus: Large ribosomal subunit protein bL20 (119 aa).

This sequence belongs to the bacterial ribosomal protein bL20 family.

Its function is as follows. Binds directly to 23S ribosomal RNA and is necessary for the in vitro assembly process of the 50S ribosomal subunit. It is not involved in the protein synthesizing functions of that subunit. This chain is Large ribosomal subunit protein bL20, found in Clostridium acetobutylicum (strain ATCC 824 / DSM 792 / JCM 1419 / IAM 19013 / LMG 5710 / NBRC 13948 / NRRL B-527 / VKM B-1787 / 2291 / W).